Here is a 433-residue protein sequence, read N- to C-terminus: 3-phosphoshikimate 1-carboxyvinyltransferase (433 aa).

3 residues coordinate 3-phosphoshikimate: K21, S22, and R26. K21 contacts phosphoenolpyruvate. The phosphoenolpyruvate site is built by G92 and R120. 3-phosphoshikimate contacts are provided by S166, Q168, D317, and K344. Q168 is a phosphoenolpyruvate binding site. D317 (proton acceptor) is an active-site residue. The phosphoenolpyruvate site is built by R348 and R391.

Belongs to the EPSP synthase family. In terms of assembly, monomer.

The protein localises to the cytoplasm. It catalyses the reaction 3-phosphoshikimate + phosphoenolpyruvate = 5-O-(1-carboxyvinyl)-3-phosphoshikimate + phosphate. It participates in metabolic intermediate biosynthesis; chorismate biosynthesis; chorismate from D-erythrose 4-phosphate and phosphoenolpyruvate: step 6/7. Its function is as follows. Catalyzes the transfer of the enolpyruvyl moiety of phosphoenolpyruvate (PEP) to the 5-hydroxyl of shikimate-3-phosphate (S3P) to produce enolpyruvyl shikimate-3-phosphate and inorganic phosphate. The protein is 3-phosphoshikimate 1-carboxyvinyltransferase of Caldicellulosiruptor bescii (strain ATCC BAA-1888 / DSM 6725 / KCTC 15123 / Z-1320) (Anaerocellum thermophilum).